Reading from the N-terminus, the 308-residue chain is Glutaminase (308 aa).

Substrate-binding residues include S66, N117, E161, N168, Y192, Y244, and V262.

This sequence belongs to the glutaminase family. In terms of assembly, homotetramer.

It catalyses the reaction L-glutamine + H2O = L-glutamate + NH4(+). In Shigella dysenteriae serotype 1 (strain Sd197), this protein is Glutaminase.